Reading from the N-terminus, the 74-residue chain is UPF0154 protein OB1676 (74 aa).

The chain crosses the membrane as a helical span at residues 4–24; sequence IWVVLIAIAALVAGVALGFFI.

The protein belongs to the UPF0154 family.

It is found in the membrane. The protein is UPF0154 protein OB1676 of Oceanobacillus iheyensis (strain DSM 14371 / CIP 107618 / JCM 11309 / KCTC 3954 / HTE831).